The following is a 388-amino-acid chain: Zinc finger C2H2 protein ECU10_0150 (388 aa).

A C2H2-type zinc finger spans residues tyrosine 299 to histidine 322.

The chain is Zinc finger C2H2 protein ECU10_0150 from Encephalitozoon cuniculi (strain GB-M1) (Microsporidian parasite).